A 447-amino-acid polypeptide reads, in one-letter code: Na(+)-translocating NADH-quinone reductase subunit A (447 aa).

Belongs to the NqrA family. As to quaternary structure, composed of six subunits; NqrA, NqrB, NqrC, NqrD, NqrE and NqrF.

The catalysed reaction is a ubiquinone + n Na(+)(in) + NADH + H(+) = a ubiquinol + n Na(+)(out) + NAD(+). Its function is as follows. NQR complex catalyzes the reduction of ubiquinone-1 to ubiquinol by two successive reactions, coupled with the transport of Na(+) ions from the cytoplasm to the periplasm. NqrA to NqrE are probably involved in the second step, the conversion of ubisemiquinone to ubiquinol. The chain is Na(+)-translocating NADH-quinone reductase subunit A from Neisseria meningitidis serogroup C / serotype 2a (strain ATCC 700532 / DSM 15464 / FAM18).